The chain runs to 78 residues: Large ribosomal subunit protein bL28 (78 aa).

It belongs to the bacterial ribosomal protein bL28 family.

This is Large ribosomal subunit protein bL28 from Trichodesmium erythraeum (strain IMS101).